The chain runs to 89 residues: Acylphosphatase (89 aa).

The Acylphosphatase-like domain occupies 4–89 (CVRCLIAGRV…IPEIQMFEVR (86 aa)). Catalysis depends on residues Arg-19 and Asn-37.

The protein belongs to the acylphosphatase family.

The enzyme catalyses an acyl phosphate + H2O = a carboxylate + phosphate + H(+). The polypeptide is Acylphosphatase (acyP) (Nitrosococcus oceani (strain ATCC 19707 / BCRC 17464 / JCM 30415 / NCIMB 11848 / C-107)).